The primary structure comprises 337 residues: Visual pigment-like receptor peropsin (337 aa).

The Extracellular segment spans residues 1 to 26 (MLSEASDFNSSGSRSEGSVFSRTEHS). N-linked (GlcNAc...) asparagine glycosylation occurs at asparagine 9. Residues 27 to 49 (VIAAYLIVAGITSILSNVVVLGI) form a helical membrane-spanning segment. Residues 50-61 (FIKYKELRTPTN) lie on the Cytoplasmic side of the membrane. A helical transmembrane segment spans residues 62–87 (AVIINLAFTDIGVSSIGYPMSAASDL). Residues 88–101 (HGSWKFGHAGCQIY) are Extracellular-facing. Cysteine 98 and cysteine 175 are oxidised to a cystine. A helical membrane pass occupies residues 102 to 121 (AGLNIFFGMVSIGLLTVVAM). The Cytoplasmic segment spans residues 122–140 (DRYLTISCPDVGRRMTTNT). Residues 141 to 164 (YLSMILGAWINGLFWALMPIIGWA) traverse the membrane as a helical segment. Residues 165–188 (SYAPDPTGATCTINWRNNDTSFVS) lie on the Extracellular side of the membrane. Residue asparagine 182 is glycosylated (N-linked (GlcNAc...) asparagine). The helical transmembrane segment at 189–212 (YTMMVIVVNFIVPLTVMFYCYYHV) threads the bilayer. Residues 213 to 240 (SRSLRLYAASDCTAHLHRDWADQADVTK) lie on the Cytoplasmic side of the membrane. Residues 241–264 (MSVIMILMFLLAWSPYSIVCLWAC) form a helical membrane-spanning segment. Residues 265–272 (FGNPKKIP) are Extracellular-facing. A helical membrane pass occupies residues 273 to 297 (PSMAIIAPLFAKSSTFYNPCIYVAA). Position 284 is an N6-(retinylidene)lysine (lysine 284). At 298 to 337 (HKKFRKAMLAMFKCQPHLAVPEPSTLPMDMPQSSLAPVRI) the chain is on the cytoplasmic side.

The protein belongs to the G-protein coupled receptor 1 family. Opsin subfamily. In terms of tissue distribution, found only in the eye, where it is localized to the retinal pigment epithelium (RPE). In the RPE, it is localized to the microvilli that surround the photoreceptor outer segments.

It is found in the membrane. Functionally, may play a role in rpe physiology either by detecting light directly or by monitoring the concentration of retinoids or other photoreceptor-derived compounds. The protein is Visual pigment-like receptor peropsin (Rrh) of Mus musculus (Mouse).